Reading from the N-terminus, the 231-residue chain is Protein HHL1, chloroplastic (231 aa).

A chloroplast-targeting transit peptide spans 1 to 39 (MEVSMSLNALTRLPLKNTGRFEEVGLARHSLFSSRTACR). Residues 93–113 (YLWYPLSIIAGGTTAKIMVAA) form a helical membrane-spanning segment. The disordered stretch occupies residues 206–231 (SFGKLSSLNPGSDEKTEETSDEKAKA). Residues 217–231 (SDEKTEETSDEKAKA) show a composition bias toward basic and acidic residues.

Interacts with psbB, psbC and LQY1, but not with psbA or psbD.

It localises to the plastid. Its subcellular location is the chloroplast thylakoid membrane. Involved in photoprotection. Forms a complex with LQY1 that is involved in the repair and reassembly cycle of the PSII-LHCII supercomplex under high-light conditions. May function in guiding the release of psbC from PSII core monomers. The polypeptide is Protein HHL1, chloroplastic (Arabidopsis thaliana (Mouse-ear cress)).